The primary structure comprises 536 residues: Chaperonin GroEL 2 (536 aa).

ATP-binding positions include 29 to 32, 86 to 90, glycine 413, 476 to 478, and aspartate 492; these read TLGP, DGTTT, and NAA.

Belongs to the chaperonin (HSP60) family. In terms of assembly, forms a cylinder of 14 subunits composed of two heptameric rings stacked back-to-back. Interacts with the co-chaperonin GroES.

The protein resides in the cytoplasm. The enzyme catalyses ATP + H2O + a folded polypeptide = ADP + phosphate + an unfolded polypeptide.. In terms of biological role, together with its co-chaperonin GroES, plays an essential role in assisting protein folding. The GroEL-GroES system forms a nano-cage that allows encapsulation of the non-native substrate proteins and provides a physical environment optimized to promote and accelerate protein folding. The protein is Chaperonin GroEL 2 of Moorella thermoacetica (strain ATCC 39073 / JCM 9320).